The chain runs to 487 residues: Phosphatidylserine synthase 2 (487 aa).

The segment covering M1 to G10 has biased composition (basic and acidic residues). Residues M1–E50 form a disordered region. Residues M1 to R62 lie on the Cytoplasmic side of the membrane. Phosphoserine occurs at positions 16 and 24. A helical membrane pass occupies residues A63–E83. At E84–G96 the chain is on the lumenal side. A helical membrane pass occupies residues I97 to F117. The Cytoplasmic portion of the chain corresponds to S118–R126. The chain crosses the membrane as a helical span at residues F127 to V147. Topologically, residues Q148–R313 are lumenal. N181 carries an N-linked (GlcNAc...) asparagine glycan. A helical transmembrane segment spans residues W314–L334. A topological domain (cytoplasmic) is located at residue K335. The chain crosses the membrane as a helical span at residues F336 to N356. The Lumenal portion of the chain corresponds to V357–K376. The helical transmembrane segment at K377–V397 threads the bilayer. Over K398 to T403 the chain is Cytoplasmic. Residues L404–L424 traverse the membrane as a helical segment. Over T425–N487 the chain is Lumenal. Residues K451 to N487 form a disordered region. The residue at position 485 (T485) is a Phosphothreonine.

This sequence belongs to the phosphatidyl serine synthase family.

It is found in the endoplasmic reticulum membrane. It carries out the reaction a 1,2-diacyl-sn-glycero-3-phosphoethanolamine + L-serine = a 1,2-diacyl-sn-glycero-3-phospho-L-serine + ethanolamine. The catalysed reaction is 1-hexadecanoyl-2-(9Z-octadecenoyl)-sn-glycero-3-phosphoethanolamine + L-serine = 1-hexadecanoyl-2-(9Z-octadecenoyl)-sn-glycero-3-phospho-L-serine + ethanolamine. The enzyme catalyses 1-hexadecanoyl-2-(4Z,7Z,10Z,13Z,16Z,19Z-docosahexaenoyl)-sn-glycero-3-phosphoethanolamine + L-serine = 1-hexadecanoyl-2-(4Z,7Z,10Z,13Z,16Z,19Z-docosahexaenoyl)-sn-glycero-3-phosphoserine + ethanolamine. It catalyses the reaction 1-octadecanoyl-2-(5Z,8Z,11Z,14Z)-eicosatetraenoyl-sn-glycero-3-phosphoethanolamine + L-serine = 1-octadecanoyl-2-(5Z,8Z,11Z,14Z)-eicosatetraenoyl-sn-glycero-3-phosphoserine + ethanolamine. It carries out the reaction 1-octadecanoyl-2-(4Z,7Z,10Z,13Z,16Z,19Z-docosahexaenoyl)-sn-glycero-3-phosphoethanolamine + L-serine = 1-octadecanoyl-2-(4Z,7Z,10Z,13Z,16Z,19Z-docosahexaenoyl)-sn-glycero-3-phosphoserine + ethanolamine. The catalysed reaction is 1-(1Z-octadecenyl)-2-(4Z,7Z,10Z,13Z,16Z,19Z-docosahexaenoyl)-sn-glycero-3-phosphoethanolamine + L-serine = 1-(1Z-octadecenyl)-2-(4Z,7Z,10Z,13Z,16Z,19Z-docosahexaenoyl)-sn-glycero-3-phospho-L-serine + ethanolamine. The enzyme catalyses 1-octadecanoyl-2-(9Z-octadecenoyl)-sn-glycero-3-phosphoethanolamine + L-serine = 1-octadecanoyl-2-(9Z-octadecenoyl)-sn-glycero-3-phospho-L-serine + ethanolamine. It catalyses the reaction 1-(1Z-octadecenyl)-2-(9Z-octadecenoyl)-sn-glycero-3-phosphoethanolamine + L-serine = 1-(1Z-octadecenyl)-2-(9Z-octadecenoyl)-sn-glycero-3-phospho-L-serine + ethanolamine. It carries out the reaction 1-(1Z-octadecenyl)-2-(5Z,8Z,11Z,14Z- eicosatetraenoyl)-sn-glycero-3-phosphoethanolamine + L-serine = 1-(1Z-octadecenyl)-2-(5Z,8Z,11Z,14Z-eicosatetraenoyl)-sn-glycero-3-phospho-L-serine + ethanolamine. It participates in phospholipid metabolism; phosphatidylserine biosynthesis. Its activity is regulated as follows. Requires calcium ions. Inhibited by exogenous phosphatidylserine. In terms of biological role, catalyzes a base-exchange reaction in which the polar head group of phosphatidylethanolamine (PE) or phosphatidylcholine (PC) is replaced by L-serine. Catalyzes the conversion of phosphatatidylethanolamine and does not act on phosphatidylcholine. Can utilize both phosphatidylethanolamine (PE) plasmalogen and diacyl PE as substrate and the latter is six times better utilized, indicating the importance of an ester linkage at the sn-1 position. Although it shows no sn-1 fatty acyl preference, exhibits significant preference towards docosahexaenoic acid (22:6n-3) compared with 18:1 or 20:4 at the sn-2 position. This chain is Phosphatidylserine synthase 2 (PTDSS2), found in Homo sapiens (Human).